The primary structure comprises 117 residues: uncharacterized protein (117 aa).

This is an uncharacterized protein from Saccharomyces cerevisiae (strain ATCC 204508 / S288c) (Baker's yeast).